The primary structure comprises 348 residues: Organic solute transporter alpha-like protein 3 (348 aa).

Topologically, residues 1–49 are extracellular; sequence MAKEHGAMRSVLNLIGSVMLPQDTSNCSDRHDTPSAPEFLSHLQPFQTV. N-linked (GlcNAc...) asparagine glycosylation is present at N26. A helical membrane pass occupies residues 50 to 70; that stretch reads LLSIASFSTTIVLCLSLIHWF. The Cytoplasmic segment spans residues 71-84; that stretch reads YVYKYVSIEKRRNK. Residues 85 to 105 traverse the membrane as a helical segment; sequence LYWLIAVFPVACSCSFIAMCV. Residues 106–109 lie on the Extracellular side of the membrane; that stretch reads PRTA. The helical transmembrane segment at 110-130 threads the bilayer; it reads VILTCIGVLYYLMCLFVIVSL. Topologically, residues 131–180 are cytoplasmic; the sequence is ARHLFGGRESFSTCLQYDDRPIDFRSPPFCCIIPKLPTARSTEKNIRRLE. Residues 181-201 form a helical membrane-spanning segment; that stretch reads WCVLQAPIVRSIIIFLDVVAV. The Extracellular portion of the chain corresponds to 202 to 213; that stretch reads AEMREDATPYIR. A helical transmembrane segment spans residues 214 to 234; that stretch reads YSDMASLCSLLLAIFGVHTLA. At 235-240 the chain is on the cytoplasmic side; that stretch reads RVTSNK. A helical transmembrane segment spans residues 241–261; that stretch reads LSAYCFMSMFRLVDISLLFFS. Residues 262–291 lie on the Extracellular side of the membrane; sequence AQQPMIFQNVLLRFNLISCGPLLNAQENAY. Residues 292-312 traverse the membrane as a helical segment; sequence FVCNFIITCEMLLLSVLATWL. At 313-348 the chain is on the cytoplasmic side; that stretch reads LAPRHNAMFDAYRPSMALSETTASLNETEQSMILDH.

Belongs to the OST-alpha family.

It is found in the cell membrane. Its function is as follows. Probable transporter. The protein is Organic solute transporter alpha-like protein 3 (osta-3) of Caenorhabditis elegans.